A 33-amino-acid polypeptide reads, in one-letter code: Alpha-amanitin proprotein (33 aa).

Residues 1-10 (MSDINATRLP) constitute a propeptide that is removed on maturation. Isoleucine 11 carries the post-translational modification (3R,4R)-4,5-dihydroxyisoleucine; in form alpha-amanitin. Isoleucine 11 is subject to (3R,4S)-4-hydroxyisoleucine; in form gamma-amanitin. The segment at residues 11-18 (IWGIGCNP) is a cross-link (cyclopeptide (Ile-Pro)). Positions 12–16 (WGIGC) form a cross-link, 2'-cysteinyl-6'-hydroxytryptophan sulfoxide (Trp-Cys). Position 18 is a 4-hydroxyproline (proline 18). Positions 19–33 (SVGDEVTALLTSGEA) are excised as a propeptide.

It belongs to the MSDIN fungal toxin family. Post-translationally, processed by the macrocyclase-peptidase enzyme POPB to yield a toxic cyclic decapeptide. POPB first removes 10 residues from the N-terminus. Conformational trapping of the remaining peptide forces the enzyme to release this intermediate rather than proceed to macrocyclization. The enzyme rebinds the remaining peptide in a different conformation and catalyzes macrocyclization of the N-terminal 8 residues.

Its function is as follows. Major toxin belonging to the bicyclic octapeptides amatoxins that acts by binding non-competitively to RNA polymerase II and greatly slowing the elongation of transcripts from target promoters. The chain is Alpha-amanitin proprotein from Amanita fuliginea (East Asian brown death cap).